Here is a 110-residue protein sequence, read N- to C-terminus: MTVATLKIKKGDTVQIITGKDRGLKGKVIRAYPEQNKVLVEGANRITRHTRVQQSARGSQSGGIVTQEAPIHVSNVMIVDPSDGRPTRIGYRINEDGTKVRISRRTGAEL.

This sequence belongs to the universal ribosomal protein uL24 family. In terms of assembly, part of the 50S ribosomal subunit.

In terms of biological role, one of two assembly initiator proteins, it binds directly to the 5'-end of the 23S rRNA, where it nucleates assembly of the 50S subunit. Functionally, one of the proteins that surrounds the polypeptide exit tunnel on the outside of the subunit. This chain is Large ribosomal subunit protein uL24, found in Frankia alni (strain DSM 45986 / CECT 9034 / ACN14a).